The sequence spans 248 residues: 2,3-bisphosphoglycerate-dependent phosphoglycerate mutase (248 aa).

Residues 8-15 (RHGESLWN), 21-22 (TG), Arg-60, 87-90 (ERHY), Lys-98, 114-115 (RR), and 183-184 (GN) contribute to the substrate site. His-9 acts as the Tele-phosphohistidine intermediate in catalysis. Catalysis depends on Glu-87, which acts as the Proton donor/acceptor.

This sequence belongs to the phosphoglycerate mutase family. BPG-dependent PGAM subfamily.

The catalysed reaction is (2R)-2-phosphoglycerate = (2R)-3-phosphoglycerate. Its pathway is carbohydrate degradation; glycolysis; pyruvate from D-glyceraldehyde 3-phosphate: step 3/5. In terms of biological role, catalyzes the interconversion of 2-phosphoglycerate and 3-phosphoglycerate. This Methanospirillum hungatei JF-1 (strain ATCC 27890 / DSM 864 / NBRC 100397 / JF-1) protein is 2,3-bisphosphoglycerate-dependent phosphoglycerate mutase.